A 556-amino-acid polypeptide reads, in one-letter code: 2-succinyl-5-enolpyruvyl-6-hydroxy-3-cyclohexene-1-carboxylate synthase (556 aa).

It belongs to the TPP enzyme family. MenD subfamily. As to quaternary structure, homodimer. The cofactor is Mg(2+). Requires Mn(2+) as cofactor. Thiamine diphosphate serves as cofactor.

It carries out the reaction isochorismate + 2-oxoglutarate + H(+) = 5-enolpyruvoyl-6-hydroxy-2-succinyl-cyclohex-3-ene-1-carboxylate + CO2. Its pathway is quinol/quinone metabolism; 1,4-dihydroxy-2-naphthoate biosynthesis; 1,4-dihydroxy-2-naphthoate from chorismate: step 2/7. It functions in the pathway quinol/quinone metabolism; menaquinone biosynthesis. Its function is as follows. Catalyzes the thiamine diphosphate-dependent decarboxylation of 2-oxoglutarate and the subsequent addition of the resulting succinic semialdehyde-thiamine pyrophosphate anion to isochorismate to yield 2-succinyl-5-enolpyruvyl-6-hydroxy-3-cyclohexene-1-carboxylate (SEPHCHC). In Escherichia coli (strain 55989 / EAEC), this protein is 2-succinyl-5-enolpyruvyl-6-hydroxy-3-cyclohexene-1-carboxylate synthase.